Consider the following 70-residue polypeptide: Conotoxin Mr3.8 (70 aa).

The N-terminal stretch at 1–24 (MLKMGVVLFIFLVLFPLATLQLDA) is a signal peptide. A propeptide spanning residues 25 to 54 (DQPVERYAKNKQLFNPHKRRGIILRAPGKR) is cleaved from the precursor. 3 cysteine pairs are disulfide-bonded: Cys55–Cys67, Cys56–Cys68, and Cys61–Cys65.

This sequence belongs to the conotoxin M superfamily. Expressed by the venom duct.

It localises to the secreted. In vitro, inhibits proliferation of the mice ovarian cancer cells ID8. The protein is Conotoxin Mr3.8 of Conus marmoreus (Marble cone).